Here is a 302-residue protein sequence, read N- to C-terminus: Sulfate adenylyltransferase subunit 2 (302 aa).

The protein belongs to the PAPS reductase family. CysD subfamily. In terms of assembly, heterodimer composed of CysD, the smaller subunit, and CysN.

The enzyme catalyses sulfate + ATP + H(+) = adenosine 5'-phosphosulfate + diphosphate. It participates in sulfur metabolism; hydrogen sulfide biosynthesis; sulfite from sulfate: step 1/3. With CysN forms the ATP sulfurylase (ATPS) that catalyzes the adenylation of sulfate producing adenosine 5'-phosphosulfate (APS) and diphosphate, the first enzymatic step in sulfur assimilation pathway. APS synthesis involves the formation of a high-energy phosphoric-sulfuric acid anhydride bond driven by GTP hydrolysis by CysN coupled to ATP hydrolysis by CysD. The sequence is that of Sulfate adenylyltransferase subunit 2 from Klebsiella pneumoniae (strain 342).